The following is a 61-amino-acid chain: Photosystem II reaction center protein K (61 aa).

A propeptide spanning residues 1-24 is cleaved from the precursor; that stretch reads MLNILSFIGICLNSFLYSSSFFVA. Residues 40–60 form a helical membrane-spanning segment; sequence MPVIPLFFFLLAFVWQAAVSF.

Belongs to the PsbK family. As to quaternary structure, PSII is composed of 1 copy each of membrane proteins PsbA, PsbB, PsbC, PsbD, PsbE, PsbF, PsbH, PsbI, PsbJ, PsbK, PsbL, PsbM, PsbT, PsbX, PsbY, PsbZ, Psb30/Ycf12, at least 3 peripheral proteins of the oxygen-evolving complex and a large number of cofactors. It forms dimeric complexes.

Its subcellular location is the plastid. It is found in the chloroplast thylakoid membrane. Its function is as follows. One of the components of the core complex of photosystem II (PSII). PSII is a light-driven water:plastoquinone oxidoreductase that uses light energy to abstract electrons from H(2)O, generating O(2) and a proton gradient subsequently used for ATP formation. It consists of a core antenna complex that captures photons, and an electron transfer chain that converts photonic excitation into a charge separation. The sequence is that of Photosystem II reaction center protein K from Cucumis sativus (Cucumber).